Here is a 502-residue protein sequence, read N- to C-terminus: MQQDGSFSADARFDAVLVGAGIMSATLAALLHELDPGLRLLLVERLEGPARESSAANNNAGTGHAANCELNYTPMQADGTVATAKAVAINAGFERSLEFWGSLRERGELDTSSFLHQAAHISAVWTAENIAFLRQRFEQLSEIPAFAAMRWSEERTELTDWMPLVMAGRDLKQPVAATRIERGTDVDFGALTRAYLEPLQRSGALCVEYGTQVRDIKRLRRGDMTEADWRVILQGPSGKREVRAPFVFLGAGGGALPLLQRSGIPEADDFAGFPVSGLWLVCGDAQLAAKQRAKVYGKAAVGAPPMSVPHLDTRWIDGQRSLLFGPFAGFSSKFLKQGSLFDLPSSVRPTNLLPMLQVGATNIELVQYLINQLRQSPEERHDALQQFMPTARAEDWSLSVAGQRVQIIKRSKQGGRLQLGTEVVASMDGSLAALLGASPGASTAVTIMLEVLQRCFKQRLASAAWNERLQALLPSIGGDPVQDPALLLAMRQRSDALLDLQG.

This sequence belongs to the MQO family. FAD serves as cofactor.

The catalysed reaction is (S)-malate + a quinone = a quinol + oxaloacetate. It participates in carbohydrate metabolism; tricarboxylic acid cycle; oxaloacetate from (S)-malate (quinone route): step 1/1. The protein is Probable malate:quinone oxidoreductase of Parasynechococcus marenigrum (strain WH8102).